Here is a 174-residue protein sequence, read N- to C-terminus: Protein VdlD (174 aa).

In terms of domain architecture, HotDog ACOT-type spans 20 to 132; that stretch reads DRTKLLMSYL…YFTMVAVENG (113 aa).

This sequence belongs to the acyl coenzyme A hydrolase family.

In Helicobacter pylori (strain J99 / ATCC 700824) (Campylobacter pylori J99), this protein is Protein VdlD (vdlD).